A 146-amino-acid polypeptide reads, in one-letter code: Ferredoxin-thioredoxin reductase catalytic chain, chloroplastic (146 aa).

The N-terminal 26 residues, 1 to 26 (MMSMASTTASPFCPSPMPRGRKCTVR), are a transit peptide targeting the chloroplast. Cys-85 contacts [4Fe-4S] cluster. Cys-87 (nucleophile) is an active-site residue. Cys-87 and Cys-117 form a disulfide bridge. Residues Cys-104, Cys-106, and Cys-115 each coordinate [4Fe-4S] cluster.

This sequence belongs to the ferredoxin thioredoxin reductase beta subunit family. As to quaternary structure, heterodimer of subunit A (variable subunit) and subunit B (catalytic subunit). Heterodimeric FTR forms a complex with ferredoxin and thioredoxin. It depends on [4Fe-4S] cluster as a cofactor.

The protein resides in the plastid. Its subcellular location is the chloroplast. It carries out the reaction [thioredoxin]-disulfide + 2 reduced [2Fe-2S]-[ferredoxin] + 2 H(+) = [thioredoxin]-dithiol + 2 oxidized [2Fe-2S]-[ferredoxin]. Catalytic subunit of the ferredoxin-thioredoxin reductase (FTR), which catalyzes the two-electron reduction of thioredoxins by the electrons provided by reduced ferredoxin. The sequence is that of Ferredoxin-thioredoxin reductase catalytic chain, chloroplastic from Oryza sativa subsp. japonica (Rice).